Here is a 235-residue protein sequence, read N- to C-terminus: 2-C-methyl-D-erythritol 4-phosphate cytidylyltransferase (235 aa).

The protein belongs to the IspD/TarI cytidylyltransferase family. IspD subfamily.

The catalysed reaction is 2-C-methyl-D-erythritol 4-phosphate + CTP + H(+) = 4-CDP-2-C-methyl-D-erythritol + diphosphate. It functions in the pathway isoprenoid biosynthesis; isopentenyl diphosphate biosynthesis via DXP pathway; isopentenyl diphosphate from 1-deoxy-D-xylulose 5-phosphate: step 2/6. Catalyzes the formation of 4-diphosphocytidyl-2-C-methyl-D-erythritol from CTP and 2-C-methyl-D-erythritol 4-phosphate (MEP). The polypeptide is 2-C-methyl-D-erythritol 4-phosphate cytidylyltransferase (Pseudomonas fluorescens (strain ATCC BAA-477 / NRRL B-23932 / Pf-5)).